The following is a 489-amino-acid chain: Rhamnulokinase (489 aa).

ATP is bound at residue 13–17; sequence ASSGR. An intrachain disulfide couples C68 to C222. Substrate-binding positions include G83 and 236–238; that span reads HDT. D237 serves as the catalytic Proton acceptor. Residue T259 participates in ATP binding. N296 contributes to the substrate binding site. Q304 is a binding site for ATP. C353 and C370 are disulfide-bonded. G402 contributes to the ATP binding site. C413 and C417 form a disulfide bridge.

Belongs to the rhamnulokinase family. Requires Mg(2+) as cofactor.

The enzyme catalyses L-rhamnulose + ATP = L-rhamnulose 1-phosphate + ADP + H(+). It participates in carbohydrate degradation; L-rhamnose degradation; glycerone phosphate from L-rhamnose: step 2/3. Functionally, involved in the catabolism of L-rhamnose (6-deoxy-L-mannose). Catalyzes the transfer of the gamma-phosphate group from ATP to the 1-hydroxyl group of L-rhamnulose to yield L-rhamnulose 1-phosphate. The polypeptide is Rhamnulokinase (Shigella sonnei (strain Ss046)).